The sequence spans 392 residues: Phosphoglycerate kinase (392 aa).

Substrate is bound by residues Asp-21–Asn-23, Arg-36, His-59–Arg-62, Arg-113, and Arg-146. ATP is bound by residues Lys-197, Glu-319, and Gly-345–Thr-348.

The protein belongs to the phosphoglycerate kinase family. In terms of assembly, monomer.

It is found in the cytoplasm. It carries out the reaction (2R)-3-phosphoglycerate + ATP = (2R)-3-phospho-glyceroyl phosphate + ADP. It functions in the pathway carbohydrate degradation; glycolysis; pyruvate from D-glyceraldehyde 3-phosphate: step 2/5. This Francisella tularensis subsp. holarctica (strain FTNF002-00 / FTA) protein is Phosphoglycerate kinase.